We begin with the raw amino-acid sequence, 122 residues long: uncharacterized protein (122 aa).

Residues 9 to 25 (AFPSPVFLGGVFFVFFF) traverse the membrane as a helical segment.

Its subcellular location is the cytoplasm. It localises to the nucleus. The protein resides in the membrane. This is an uncharacterized protein from Saccharomyces cerevisiae (strain ATCC 204508 / S288c) (Baker's yeast).